A 289-amino-acid polypeptide reads, in one-letter code: MASEGDSIDYYELLGINEDAQDQEIHRAWRKTSLKYHPDKNPNDPKAAEKFHMLQLAYNALIDVQLRKAYDSERFAKLARKRREEAFNFQRKSMVDDLRERERQFYDSLEKKENERDRLQEKLRALQEESANLRRQRENRLREEQEQSKRRKQETPSSKISELDRSIRIRWKRKYADQVNDAYLRSIYSSFGTLQNVVIQKDISKEKKYVYSIIVFETLSSAYSAINAEKPSKIYDVQWLKPPKSNSNTPTEKDTTVEDYEEITIMRMKQKHKQKQKENERKATSTMNA.

One can recognise a J domain in the interval 9 to 74 (DYYELLGINE…QLRKAYDSER (66 aa)). Residues 129–148 (ESANLRRQRENRLREEQEQS) are compositionally biased toward basic and acidic residues. Disordered stretches follow at residues 129–161 (ESAN…SKIS) and 269–289 (KQKH…TMNA).

This sequence belongs to the DnaJ family. As to quaternary structure, belongs to the 40S cdc5-associated complex (or cwf complex), a spliceosome sub-complex reminiscent of a late-stage spliceosome composed of the U2, U5 and U6 snRNAs and at least brr2, cdc5, cwf2/prp3, cwf3/syf1, cwf4/syf3, cwf5/ecm2, spp42/cwf6, cwf7/spf27, cwf8, cwf9, cwf10, cwf11, cwf12, prp45/cwf13, cwf14, cwf15, cwf16, cwf17, cwf18, cwf19, cwf20, cwf21, cwf22, cwf23, cwf24, cwf25, cwf26, cyp7/cwf27, cwf28, cwf29/ist3, lea1, msl1, prp5/cwf1, prp10, prp12/sap130, prp17, prp22, sap61, sap62, sap114, sap145, slu7, smb1, smd1, smd3, smf1, smg1 and syf2.

It localises to the cytoplasm. The protein resides in the nucleus. In terms of biological role, involved in pre-mRNA splicing. May be involved in endoplasmic reticulum-associated protein degradation (ERAD) and required for growth at low and high temperatures. The sequence is that of Pre-mRNA-splicing factor cwf23 (cwf23) from Schizosaccharomyces pombe (strain 972 / ATCC 24843) (Fission yeast).